The following is a 1196-amino-acid chain: MEESPPKQKSNTKVTQHEGQQDLNTTRHMNVELKHRPKLERHLKLGMIPVVYMKQGEEILYPAQSLREENLIQNFTSLLLLQKLCPKDPENMVRKSWASCVPEEGGHMINIQDLFGPNIGTQKEPQLVIIEGAAGIGKSTLARLVKRAWKEGQLYRDHFQHVFFFSCRELAQCKKLSLAELIAQGQEVPTAPINQILSHPEKLLFILDGIDEPAWVLADQNPELCLHWSQRQPVHTLLGSLLGKSIFPEAFFLLTTRTTALQKFIPSLPMPCQVEVLGFSGIERENYFYKYFANQRHAITAFMMVESNPVLLTLCEVPWVCWLVCTCLKKQMEQGRVLSLKSQTTTALCLKYLSLTIPDKHRRTQVKALCSLAAEGIWKRRTLFSESDLCKQGLDEDAVATFLKTGVLQKQASSLSYSFAHLCLQEFFAAISCILEDSEERHGNMEMDRIVETLVERYGRQNLFEAPTVRFLFGLLGKEGVKGMEKLFSCSLHGKTNLKLLWHILVKSQPHQPPCLGLLHCLYENQDMELLTHVMHDLQGTIVPGPNDIAHTVLQTNVKHLVVQTDMELMVATFCIQFYCHVRTLQLNMEKQQGYALISPRMVLYRWTPITNASWEILFYNLKFTRNLEGLDLSGNSLRYSVVQSLCNTLRYPGCQLKTLWLVKCGLTSRHCSLLASVLSAHSSLTELYLQLNDLGDDGVRMLCEGLRNPVCNLSILWLDLYSLSAQVITELRTLEEKNPKLYIRSIWMPHMMVPTENMDEEAILTTFKQQRQEPGDKPMEILGTEEDFWGPTGPVATELVDRVRNLYRVQLPMAGSYHCPSTGLHFVVTRAVTIEIEFCAWSQFLDKTPLQQSHMVVGPLFDIKAEQGAVTAVYLPHFVSLKDTEASTFDFKVAHFQEHGMVLETPDRVKPGYTVLKNPSFSPMGVVLRIIPAARHFIPITSITLIYYRLNLEEVTLHLYLVPNDCTIQKAIDDEEMKFQFVRINKPPPVDNLFIGSRYIVSGSENLEITPKELELCYRSSKEFQLFSEIYVGNMGSEIKLQIKNKKHMKLIWEALLKPEFKFDHLCDQEFCTILKNIMISPAGDLRPALPRIAQALKDAPSLLHFMDQHREQLVARVTSVDPLLDKLHGLVLNEESYEAVRAENTNQDKMRKLFNLSRSWSRACKDLFYQALKETHPHLVMDLFEKSGGVSLGS.

The tract at residues 1 to 22 (MEESPPKQKSNTKVTQHEGQQD) is disordered. The 310-residue stretch at 126-435 (QLVIIEGAAG…EFFAAISCIL (310 aa)) folds into the NACHT domain. 132–139 (GAAGIGKS) lines the ATP pocket. 2 LRR repeats span residues 627–647 (NLEGLDLSGNSLRYSVVQSLC) and 684–704 (SLTELYLQLNDLGDDGVRMLC). The tract at residues 789–922 (FWGPTGPVAT…GYTVLKNPSF (134 aa)) is ZU5. An FIIND domain is found at 789 to 1072 (FWGPTGPVAT…KFDHLCDQEF (284 aa)). Positions 923–1072 (SPMGVVLRII…KFDHLCDQEF (150 aa)) are UPA. The region spanning 1106–1189 (HFMDQHREQL…HLVMDLFEKS (84 aa)) is the CARD domain.

Belongs to the NLRP family. In terms of assembly, interacts with DPP9; leading to inhibit activation of the inflammasome. DPP9 acts via formation of a ternary complex, composed of a DPP9 homodimer, one full-length Nlrp1b protein, and one cleaved C-terminus of Nlrp1b (NACHT, LRR and PYD domains-containing protein 1b, C-terminus). Interacts with DPP8; leading to inhibit activation of the inflammasome, probably via formation of a ternary complex with DPP8. Interacts (via LRR repeats) with BCL2 and BCL2L1 (via the loop between motifs BH4 and BH3). Interacts with NOD2; this interaction may increase IL1B release. Interacts with EIF2AK2/PKR; this interaction requires EIF2AK2 activity, is accompanied by EIF2AK2 autophosphorylation and promotes inflammasome assembly in response to B.anthracis lethal toxin. Interacts with MEFV; this interaction targets Nlrp1b to degradation by autophagy, hence preventing excessive IL1B- and IL18-mediated inflammation. Interacts with the C-terminal part of Nlrp1b (NACHT, LRR and PYD domains-containing protein 1b, C-terminus) in absence of pathogens and other damage-associated signals. As to quaternary structure, interacts with the N-terminal part of Nlrp1b (NACHT, LRR and PYD domains-containing protein 1b, N-terminus) in absence of pathogens and other damage-associated signals. Homomultimer; forms the Nlrp1b inflammasome polymeric complex, a filament composed of homopolymers of this form in response to pathogens and other damage-associated signals. The Nlrp1b inflammasome polymeric complex directly recruits pro-caspase-1 (proCASP1) independently of PYCARD/ASC. Interacts (via CARD domain) with CASP1 (via CARD domain); leading to CASP1 activation. Post-translationally, autocatalytically cleaved. Autocatalytic cleavage in FIIND region occurs constitutively, prior to activation signals, and is required for inflammasome activity (IL1B release), possibly by facilitating CASP1 binding. Both N- and C-terminal parts remain associated non-covalently. In terms of processing, ubiquitinated by the N-end rule pathway in response to pathogens and other damage-associated signals, leading to its degradation by the proteasome and subsequent release of the cleaved C-terminal part of the protein (NACHT, LRR and PYD domains-containing protein 1b, C-terminus), which polymerizes and forms the Nlrp1b inflammasome. (Microbial infection) Cleavage by B.anthracis lethal toxin (LT) endopeptidase promotes ubiquitination and degradation of the N-terminal part, releasing the cleaved C-terminal part of the protein (NACHT, LRR and PYD domains-containing protein 1b, C-terminus), which polymerizes and forms the Nlrp1b inflammasome. Expressed in macrophages.

The protein localises to the cytoplasm. It is found in the cytosol. The protein resides in the inflammasome. With respect to regulation, activated by cleavage by B.anthracis lethal toxin (LT) endopeptidase. Cleavage by LT promotes ubiquitination and degradation of the N-terminal part, releasing the cleaved C-terminal part of the protein (NACHT, LRR and PYD domains-containing protein 1b, C-terminus), which polymerizes and forms the Nlrp1b inflammasome. Nlrp1b inflammasome is inhibited by DPP8 and DPP9, which sequester the C-terminal fragment of Nlrp1b (NACHT, LRR and PYD domains-containing protein 1b, C-terminus) in a ternary complex, thereby preventing Nlrp1b oligomerization and activation. Nlrp1b inflammasome is activated by Val-boroPro (Talabostat, PT-100), an inhibitor of dipeptidyl peptidases DPP8 and DPP9. Val-boroPro relieves inhibition of DPP8 and/or DPP9 by promoting disruption of the ternary complex, releasing its C-terminal part from autoinhibition. Activated by metabolic inhibitors, such as 2-deoxy-D-glucose and sodium azide. Not activated by muramyl dipeptide, nor by full-length bacterial peptidoglycan. Acts as the sensor component of the Nlrp1b inflammasome, which mediates inflammasome activation in response to various pathogen-associated signals, leading to subsequent pyroptosis. Inflammasomes are supramolecular complexes that assemble in the cytosol in response to pathogens and other damage-associated signals and play critical roles in innate immunity and inflammation. Acts as a recognition receptor (PRR): recognizes specific pathogens and other damage-associated signals, such as B.anthracis lethal toxin (LT) or Val-boroPro inhibitor, and mediates the formation of the inflammasome polymeric complex. In response to pathogen-associated signals, the N-terminal part of Nlrp1b is degraded by the proteasome, releasing the cleaved C-terminal part of the protein (NACHT, LRR and PYD domains-containing protein 1b, C-terminus), which polymerizes to initiate the formation of the inflammasome complex: the inflammasome directly recruits pro-caspase-1 (proCASP1) independently of PYCARD/ASC and promotes caspase-1 (CASP1) activation, which subsequently cleaves and activates inflammatory cytokines IL1B and IL18 and gasdermin-D (GSDMD), leading to pyroptosis. In the absence of GSDMD expression, the Nlrp1b inflammasome is able to recruit and activate CASP8, leading to activation of gasdermin-E (GSDME). Activation of Nlrp1b inflammasome is also required for HMGB1 secretion; the active cytokines and HMGB1 stimulate inflammatory responses. Primary mediator of macrophage susceptibility to B.anthracis LT: in response to B.anthracis infection, macrophages and dendritic cells release IL1B and undergo pyroptosis. This early inflammatory response to the toxin increases resistance to infection by B.anthracis spores. Its function is as follows. Constitutes the precursor of the Nlrp1b inflammasome, which mediates autoproteolytic processing within the FIIND domain to generate the N-terminal and C-terminal parts, which are associated non-covalently in absence of pathogens and other damage-associated signals. Functionally, regulatory part that prevents formation of the Nlrp1b inflammasome: in absence of pathogens and other damage-associated signals, interacts with the C-terminal part of Nlrp1b (NACHT, LRR and PYD domains-containing protein 1b, C-terminus), preventing activation of the Nlrp1b inflammasome. In response to pathogen-associated signals, this part is ubiquitinated by the N-end rule pathway and degraded by the proteasome, releasing the cleaved C-terminal part of the protein, which polymerizes and forms the Nlrp1b inflammasome. In terms of biological role, constitutes the active part of the Nlrp1b inflammasome. In absence of pathogens and other damage-associated signals, interacts with the N-terminal part of Nlrp1b (NACHT, LRR and PYD domains-containing protein 1b, N-terminus), preventing activation of the Nlrp1b inflammasome. In response to pathogen-associated signals, the N-terminal part of Nlrp1b is degraded by the proteasome, releasing this form, which polymerizes to form the Nlrp1b inflammasome complex: the Nlrp1b inflammasome complex then directly recruits pro-caspase-1 (proCASP1) and promotes caspase-1 (CASP1) activation, leading to gasdermin-D (GSDMD) cleavage and subsequent pyroptosis. The protein is NACHT, LRR and PYD domains-containing protein 1b allele 5 (Nlrp1b) of Mus musculus (Mouse).